A 187-amino-acid chain; its full sequence is Adenine phosphoribosyltransferase (187 aa).

The protein belongs to the purine/pyrimidine phosphoribosyltransferase family. In terms of assembly, homodimer.

It localises to the cytoplasm. It carries out the reaction AMP + diphosphate = 5-phospho-alpha-D-ribose 1-diphosphate + adenine. It participates in purine metabolism; AMP biosynthesis via salvage pathway; AMP from adenine: step 1/1. Its function is as follows. Catalyzes a salvage reaction resulting in the formation of AMP, that is energically less costly than de novo synthesis. In Yersinia pseudotuberculosis serotype I (strain IP32953), this protein is Adenine phosphoribosyltransferase.